Reading from the N-terminus, the 440-residue chain is Amino-acid acetyltransferase (440 aa).

Residues 289 to 429 (ETIRLATVSD…QHYNYQRRSK (141 aa)) enclose the N-acetyltransferase domain.

The protein belongs to the acetyltransferase family. ArgA subfamily.

It localises to the cytoplasm. The catalysed reaction is L-glutamate + acetyl-CoA = N-acetyl-L-glutamate + CoA + H(+). The protein operates within amino-acid biosynthesis; L-arginine biosynthesis; N(2)-acetyl-L-ornithine from L-glutamate: step 1/4. This is Amino-acid acetyltransferase (argA) from Pasteurella multocida (strain Pm70).